We begin with the raw amino-acid sequence, 873 residues long: Inner centromere protein A (873 aa).

Disordered stretches follow at residues Ala-50–Thr-124, Pro-237–Lys-270, Phe-282–His-452, Lys-484–Arg-535, Gln-566–Gln-649, Leu-683–Ala-736, and Asp-781–Ala-800. Residues Ser-60–Thr-69 show a composition bias toward basic residues. Over residues Arg-87–Gln-105 the composition is skewed to low complexity. A compositionally biased stretch (polar residues) spans Asn-239–Gly-254. The segment covering Ser-261 to Lys-270 has biased composition (basic residues). The segment covering Ser-286–Arg-297 has biased composition (basic and acidic residues). A compositionally biased stretch (low complexity) spans Ser-314–Ser-325. Over residues Pro-437–His-452 the composition is skewed to pro residues. 4 stretches are compositionally biased toward basic and acidic residues: residues Thr-491–Arg-535, Gln-566–Ala-584, Lys-591–Gln-649, and Leu-683–Glu-733. Residues Lys-494–Glu-707 form an SAH region. Positions Leu-782–Pro-856 are IN box. A phosphoserine mark is found at Ser-849 and Ser-850.

This sequence belongs to the INCENP family. In terms of assembly, component of the CPC composed of survivin/birc5, incenp, cdca8/borealin and/or cdca9/dasra-A, and aurkb/aurora-B. Interacts (via C-terminus) with aurkb (via N-terminus and kinase domain). Interacts (via N-terminus) with birc5.1, birc5.2, cdca8 and cdca9. Interacts with mtus1.

It localises to the nucleus. The protein resides in the chromosome. Its subcellular location is the centromere. The protein localises to the cytoplasm. It is found in the cytoskeleton. It localises to the spindle. The protein resides in the midbody. Its subcellular location is the kinetochore. Its function is as follows. Component of the chromosomal passenger complex (CPC), a complex that acts as a key regulator of mitosis. The CPC complex has essential functions at the centromere in ensuring correct chromosome alignment and segregation and is required for chromatin-induced microtubule stabilization and spindle assembly. Acts as a scaffold regulating CPC localization and activity. The C-terminus associates with aurkb/aurora-B, the N-terminus associated with cdca8/borealin and/or cdca9/dasra-A tethers the CPC to the inner centromere, and the microtubule binding activity within the central SAH domain directs aurkb/aurora-B toward substrates near microtubules. Activates aurkb. The sequence is that of Inner centromere protein A (incenp-a) from Xenopus laevis (African clawed frog).